We begin with the raw amino-acid sequence, 354 residues long: Nicotinate-nucleotide--dimethylbenzimidazole phosphoribosyltransferase (354 aa).

Glutamate 317 (proton acceptor) is an active-site residue.

Belongs to the CobT family. As to quaternary structure, homodimer.

The catalysed reaction is 5,6-dimethylbenzimidazole + nicotinate beta-D-ribonucleotide = alpha-ribazole 5'-phosphate + nicotinate + H(+). It functions in the pathway nucleoside biosynthesis; alpha-ribazole biosynthesis; alpha-ribazole from 5,6-dimethylbenzimidazole: step 1/2. Functionally, catalyzes the synthesis of alpha-ribazole-5'-phosphate from nicotinate mononucleotide (NAMN) and 5,6-dimethylbenzimidazole (DMB). In Salmonella arizonae (strain ATCC BAA-731 / CDC346-86 / RSK2980), this protein is Nicotinate-nucleotide--dimethylbenzimidazole phosphoribosyltransferase.